Consider the following 149-residue polypeptide: Large ribosomal subunit protein bL9 (149 aa).

It belongs to the bacterial ribosomal protein bL9 family.

Its function is as follows. Binds to the 23S rRNA. This is Large ribosomal subunit protein bL9 from Mannheimia succiniciproducens (strain KCTC 0769BP / MBEL55E).